The sequence spans 207 residues: Dephospho-CoA kinase (207 aa).

The DPCK domain maps to alanine 8–serine 207. Glycine 16–threonine 21 is an ATP binding site.

Belongs to the CoaE family.

It localises to the cytoplasm. It catalyses the reaction 3'-dephospho-CoA + ATP = ADP + CoA + H(+). It functions in the pathway cofactor biosynthesis; coenzyme A biosynthesis; CoA from (R)-pantothenate: step 5/5. Catalyzes the phosphorylation of the 3'-hydroxyl group of dephosphocoenzyme A to form coenzyme A. In Helicobacter hepaticus (strain ATCC 51449 / 3B1), this protein is Dephospho-CoA kinase.